Reading from the N-terminus, the 485-residue chain is Proline--tRNA ligase (485 aa).

This sequence belongs to the class-II aminoacyl-tRNA synthetase family. ProS type 3 subfamily. As to quaternary structure, homodimer.

The protein resides in the cytoplasm. It carries out the reaction tRNA(Pro) + L-proline + ATP = L-prolyl-tRNA(Pro) + AMP + diphosphate. Catalyzes the attachment of proline to tRNA(Pro) in a two-step reaction: proline is first activated by ATP to form Pro-AMP and then transferred to the acceptor end of tRNA(Pro). This chain is Proline--tRNA ligase, found in Methanopyrus kandleri (strain AV19 / DSM 6324 / JCM 9639 / NBRC 100938).